A 363-amino-acid polypeptide reads, in one-letter code: S-adenosylmethionine:tRNA ribosyltransferase-isomerase (363 aa).

The protein belongs to the QueA family. As to quaternary structure, monomer.

The protein localises to the cytoplasm. It carries out the reaction 7-aminomethyl-7-carbaguanosine(34) in tRNA + S-adenosyl-L-methionine = epoxyqueuosine(34) in tRNA + adenine + L-methionine + 2 H(+). It functions in the pathway tRNA modification; tRNA-queuosine biosynthesis. Functionally, transfers and isomerizes the ribose moiety from AdoMet to the 7-aminomethyl group of 7-deazaguanine (preQ1-tRNA) to give epoxyqueuosine (oQ-tRNA). The protein is S-adenosylmethionine:tRNA ribosyltransferase-isomerase of Haemophilus influenzae (strain PittGG).